We begin with the raw amino-acid sequence, 122 residues long: Ribonuclease P protein component (122 aa).

Belongs to the RnpA family. In terms of assembly, consists of a catalytic RNA component (M1 or rnpB) and a protein subunit.

The enzyme catalyses Endonucleolytic cleavage of RNA, removing 5'-extranucleotides from tRNA precursor.. Functionally, RNaseP catalyzes the removal of the 5'-leader sequence from pre-tRNA to produce the mature 5'-terminus. It can also cleave other RNA substrates such as 4.5S RNA. The protein component plays an auxiliary but essential role in vivo by binding to the 5'-leader sequence and broadening the substrate specificity of the ribozyme. The protein is Ribonuclease P protein component of Synechococcus elongatus (strain ATCC 33912 / PCC 7942 / FACHB-805) (Anacystis nidulans R2).